The sequence spans 208 residues: Putative vomeronasal receptor-like protein 4 (208 aa).

Residues 1 to 19 (MEMTKLFSYIVIKNVYYPQ) are Extracellular-facing. A helical membrane pass occupies residues 20–40 (VSFGISANTFLLLFHIFTFAY). Topologically, residues 41-48 (THRLKPID) are cytoplasmic. Residues 49-69 (MTISHLPLIHILLLFTQAILV) traverse the membrane as a helical segment. The Extracellular segment spans residues 70 to 97 (SSDLFESWNIQNNDLKCKIITFLNRVMR). C86 and C173 are disulfide-bonded. A helical transmembrane segment spans residues 98-118 (GVSICTTCLLSVLQAITISPS). Residues 119-135 (TSFLEKFKHISANHTLG) lie on the Cytoplasmic side of the membrane. The helical transmembrane segment at 136–156 (FILFSWVLNMFITNNLLLFIV) threads the bilayer. Over 157–183 (PTPNRIGASLLFVTEHCYVLPMSYTHR) the chain is Extracellular. A helical transmembrane segment spans residues 184 to 204 (SLFFILMVLRDVIFIGLMVLS). The Cytoplasmic segment spans residues 205–208 (SGYG).

The protein belongs to the G-protein coupled receptor 1 family. In terms of tissue distribution, expressed in olfactory nerve.

It is found in the cell membrane. Putative pheromone receptor. The protein is Putative vomeronasal receptor-like protein 4 (VN1R17P) of Homo sapiens (Human).